Here is a 175-residue protein sequence, read N- to C-terminus: uncharacterized protein (175 aa).

The signal sequence occupies residues 1-23 (MILVLLLILIAFLYIYFPSSLNQ).

This is an uncharacterized protein from Invertebrate iridescent virus 6 (IIV-6).